The chain runs to 133 residues: C-C motif chemokine 21a (133 aa).

The first 23 residues, 1 to 23, serve as a signal peptide directing secretion; it reads MAQMMTLSLLSLVLALCIPWTQG. Disulfide bonds link Cys-31/Cys-57, Cys-32/Cys-75, and Cys-103/Cys-122. Residues 86–133 form a disordered region; that stretch reads LMRRLDQPPAPGKQSPGCRKNRGTSKSGKKGKGSKGCKRTEQTQPSRG. Positions 98 to 133 are C-terminal basic extension; that stretch reads KQSPGCRKNRGTSKSGKKGKGSKGCKRTEQTQPSRG. The span at 104–122 shows a compositional bias: basic residues; the sequence is RKNRGTSKSGKKGKGSKGC.

The protein belongs to the intercrine beta (chemokine CC) family. As to quaternary structure, binds to CCR7 and to CXCR3. Interacts with PDPN; relocalizes PDPN to the basolateral membrane. Interacts with GPR174. In terms of tissue distribution, expressed strongly in lung, spleen, thymus, peripheral and mesentric lymph nodes. Also expressed in the testis, kidney, liver, and heart.

The protein resides in the secreted. In terms of biological role, inhibits hemopoiesis and stimulates chemotaxis. Chemotactic in vitro for thymocytes and activated T-cells, but not for B-cells, macrophages, or neutrophils. Potent mesangial cell chemoattractant. Shows preferential activity towards naive T-cells. May play a role in mediating homing of lymphocytes to secondary lymphoid organs. The protein is C-C motif chemokine 21a (Ccl21a) of Mus musculus (Mouse).